Reading from the N-terminus, the 290-residue chain is 33 kDa chaperonin (290 aa).

2 disulfide bridges follow: cysteine 235–cysteine 237 and cysteine 268–cysteine 271.

It belongs to the HSP33 family. Under oxidizing conditions two disulfide bonds are formed involving the reactive cysteines. Under reducing conditions zinc is bound to the reactive cysteines and the protein is inactive.

Its subcellular location is the cytoplasm. Its function is as follows. Redox regulated molecular chaperone. Protects both thermally unfolding and oxidatively damaged proteins from irreversible aggregation. Plays an important role in the bacterial defense system toward oxidative stress. The polypeptide is 33 kDa chaperonin (Streptococcus pneumoniae (strain P1031)).